A 389-amino-acid chain; its full sequence is Succinate--CoA ligase [ADP-forming] subunit beta (389 aa).

The ATP-grasp domain occupies 9 to 236; the sequence is RDMFEAHGVP…KDAADPLEAK (228 aa). ATP is bound by residues Lys45, 52–54, Ala94, and Glu99; that span reads GRG. Asn191 and Asp205 together coordinate Mg(2+). Residues Asn256 and 318 to 320 each bind substrate; that span reads GIT.

It belongs to the succinate/malate CoA ligase beta subunit family. As to quaternary structure, heterotetramer of two alpha and two beta subunits. Requires Mg(2+) as cofactor.

It catalyses the reaction succinate + ATP + CoA = succinyl-CoA + ADP + phosphate. It carries out the reaction GTP + succinate + CoA = succinyl-CoA + GDP + phosphate. The protein operates within carbohydrate metabolism; tricarboxylic acid cycle; succinate from succinyl-CoA (ligase route): step 1/1. Its function is as follows. Succinyl-CoA synthetase functions in the citric acid cycle (TCA), coupling the hydrolysis of succinyl-CoA to the synthesis of either ATP or GTP and thus represents the only step of substrate-level phosphorylation in the TCA. The beta subunit provides nucleotide specificity of the enzyme and binds the substrate succinate, while the binding sites for coenzyme A and phosphate are found in the alpha subunit. This Arthrobacter sp. (strain FB24) protein is Succinate--CoA ligase [ADP-forming] subunit beta.